The chain runs to 437 residues: Chaperone SurA (437 aa).

The first 22 residues, 1-22 (MKNWKFPLISTLLLLLTINVHA), serve as a signal peptide directing secretion. 2 consecutive PpiC domains span residues 173–274 (TVQY…KIDD) and 283–383 (VTEV…EVLE).

Its subcellular location is the periplasm. The catalysed reaction is [protein]-peptidylproline (omega=180) = [protein]-peptidylproline (omega=0). Its function is as follows. Chaperone involved in the correct folding and assembly of outer membrane proteins. Recognizes specific patterns of aromatic residues and the orientation of their side chains, which are found more frequently in integral outer membrane proteins. May act in both early periplasmic and late outer membrane-associated steps of protein maturation. This chain is Chaperone SurA, found in Aliivibrio fischeri (strain ATCC 700601 / ES114) (Vibrio fischeri).